Here is a 469-residue protein sequence, read N- to C-terminus: Probable monogalactosyldiacylglycerol synthase 2, chloroplastic (469 aa).

A chloroplast-targeting transit peptide spans 1–42 (MVISVATPRRSIRDAVLGGVLGAGGRQLYQPLRCAFYDGAAG).

The protein belongs to the glycosyltransferase 28 family.

It is found in the plastid. The protein localises to the chloroplast membrane. The catalysed reaction is a 1,2-diacyl-sn-glycerol + UDP-alpha-D-galactose = a 1,2-diacyl-3-O-(beta-D-galactosyl)-sn-glycerol + UDP + H(+). Involved in the synthesis of the major structural component of photosynthetic membranes. The chain is Probable monogalactosyldiacylglycerol synthase 2, chloroplastic (MGD2) from Oryza sativa subsp. japonica (Rice).